Here is a 70-residue protein sequence, read N- to C-terminus: Large ribosomal subunit protein eL38 (70 aa).

This sequence belongs to the eukaryotic ribosomal protein eL38 family.

The polypeptide is Large ribosomal subunit protein eL38 (RpL38) (Lonomia obliqua (Moth)).